The primary structure comprises 465 residues: Chromosomal replication initiator protein DnaA (465 aa).

The tract at residues 1 to 84 (MSLSLWQQCL…RFEVGSKPLV (84 aa)) is domain I, interacts with DnaA modulators. The domain II stretch occupies residues 84–128 (VQTISQPAQSHHNPVSVARQQPVRMAPVRPSWDNSPVQAEHTYRS). Residues 129–345 (NVNPKHTFDN…GALNRVIANA (217 aa)) form a domain III, AAA+ region region. ATP-binding residues include Gly173, Gly175, Lys176, and Thr177. Residues 346–465 (NFTGRSITID…FSNLIRTLSS (120 aa)) are domain IV, binds dsDNA.

Belongs to the DnaA family. In terms of assembly, oligomerizes as a right-handed, spiral filament on DNA at oriC.

The protein localises to the cytoplasm. Plays an essential role in the initiation and regulation of chromosomal replication. ATP-DnaA binds to the origin of replication (oriC) to initiate formation of the DNA replication initiation complex once per cell cycle. Binds the DnaA box (a 9 base pair repeat at the origin) and separates the double-stranded (ds)DNA. Forms a right-handed helical filament on oriC DNA; dsDNA binds to the exterior of the filament while single-stranded (ss)DNA is stabiized in the filament's interior. The ATP-DnaA-oriC complex binds and stabilizes one strand of the AT-rich DNA unwinding element (DUE), permitting loading of DNA polymerase. After initiation quickly degrades to an ADP-DnaA complex that is not apt for DNA replication. Binds acidic phospholipids. In Pectobacterium atrosepticum (strain SCRI 1043 / ATCC BAA-672) (Erwinia carotovora subsp. atroseptica), this protein is Chromosomal replication initiator protein DnaA.